A 500-amino-acid chain; its full sequence is MEVASLYRRVLPSPPAVEFASAEGKRLFAEALQGGTMEGFFNLISYFQTQSEPAFCGLASLSVVLNALAIDPGRPWKGPWRWFDESMLDCCEPLHKVKAEGITFGKVVCLAHCAGARVQSFRADQTTIHDFRAHLTRCASSQDCHLISSYHRSPFKQTGTGHFSPIGGYHAEKDMALILDVARFKYPPHWVPLTLLWDAMNTTDEATGLLRGFMLVSRRSSAPSLLYTVSCGHGSWKSMAKYCVEDVPNLLKDESLDNVTTLLSRLVESLPANAGDLIKCVIEVRRKEEGESSLSKEEKERLFLKEKVLQQIRDTDLFRVVHELQYPKGLCGSCSSSSDEDSLAEIAATVCCQGAAFLSGNLVSRDGFCCRETCIKCIEANGDGLKTVISGTVVSKGNEQAVDLLLPTSSSKTSLCNSNLKSKIVKYPSSTDVLTVLLLVLQPNTWLGIKDENVKAEFQSLVSTDNLPDLLKQEILHLRRQLHYLAGCKGQEACQEPPSP.

The 221-residue stretch at 1-221 folds into the Peptidase C83 domain; it reads MEVASLYRRV…GFMLVSRRSS (221 aa). Catalysis depends on residues Cys-56, His-162, and Asp-180.

The protein belongs to the phytochelatin synthase family. As to expression, expressed in roots and shoots.

It catalyses the reaction [Glu(-Cys)](n)-Gly + glutathione + H(+) = [Glu(-Cys)](n+1)-Gly + glycine. With respect to regulation, requires cadmium for activity. Functionally, involved in the synthesis of phytochelatins (PC) and homophytochelatins (hPC), the heavy-metal-binding peptides of plants. This Triticum aestivum (Wheat) protein is Glutathione gamma-glutamylcysteinyltransferase 1 (PCS1).